Here is a 210-residue protein sequence, read N- to C-terminus: Menaquinone reductase, multiheme cytochrome c subunit (210 aa).

The chain crosses the membrane as a helical span at residues 20–40; it reads GGAAPFFVGLVVALVFGWWAF. Residues cysteine 67, cysteine 70, histidine 71, cysteine 88, cysteine 91, histidine 92, cysteine 140, cysteine 143, histidine 144, cysteine 152, cysteine 155, histidine 156, cysteine 186, cysteine 189, histidine 190, cysteine 205, cysteine 208, and histidine 209 each coordinate heme.

Belongs to the multiheme cytochrome c family. The Qrc complex is composed of four subunits: QrcA, QrcB, QrcC and QrcD. Can form a supercomplex with the [NiFe] hydrogenase HynA1 and the tetraheme Type I cytochrome c3 TpIc(3), its physiological electron donors. Heme c is required as a cofactor.

It localises to the cell inner membrane. In terms of biological role, component of the respiratory Qrc complex, that catalyzes the reduction of the menaquinone pool using electrons transferred from the reduced periplasmic cytochrome c3, and which is probably involved in sulfate respiration. Is likely essential for growth on H(2) or formate since the periplasmic hydrogenases and/or formate dehydrogenases act as primary electron donors for the Qrc complex. This is Menaquinone reductase, multiheme cytochrome c subunit from Nitratidesulfovibrio vulgaris (strain ATCC 29579 / DSM 644 / CCUG 34227 / NCIMB 8303 / VKM B-1760 / Hildenborough) (Desulfovibrio vulgaris).